The following is a 309-amino-acid chain: Aspartate carbamoyltransferase catalytic subunit (309 aa).

Carbamoyl phosphate-binding residues include Arg-55 and Thr-56. Lys-85 is a binding site for L-aspartate. Carbamoyl phosphate contacts are provided by Arg-106, His-135, and Gln-138. L-aspartate contacts are provided by Arg-168 and Arg-230. 2 residues coordinate carbamoyl phosphate: Leu-268 and Pro-269.

It belongs to the aspartate/ornithine carbamoyltransferase superfamily. ATCase family. As to quaternary structure, heterododecamer (2C3:3R2) of six catalytic PyrB chains organized as two trimers (C3), and six regulatory PyrI chains organized as three dimers (R2).

The catalysed reaction is carbamoyl phosphate + L-aspartate = N-carbamoyl-L-aspartate + phosphate + H(+). Its pathway is pyrimidine metabolism; UMP biosynthesis via de novo pathway; (S)-dihydroorotate from bicarbonate: step 2/3. Its function is as follows. Catalyzes the condensation of carbamoyl phosphate and aspartate to form carbamoyl aspartate and inorganic phosphate, the committed step in the de novo pyrimidine nucleotide biosynthesis pathway. The sequence is that of Aspartate carbamoyltransferase catalytic subunit from Vibrio campbellii (strain ATCC BAA-1116).